The sequence spans 398 residues: Ubiquitin-like modifier-activating enzyme 5 (398 aa).

The ATP site is built by Gly-79, Asp-100, Lys-123, Asn-146, and Asn-180. Zn(2+)-binding residues include Cys-222 and Cys-225. The active-site Glycyl thioester intermediate is Cys-246. Positions 299 and 304 each coordinate Zn(2+). The short motif at 330–342 is the UFM1-interacting sequence (UIS) element; the sequence is VVHEDNEWGIELV. The linker stretch occupies residues 343–373; the sequence is SEVTEAELQDASGPIPDLPEGITVAYTIPEK. Residues 383 to 398 carry the UFC1-binding sequence (UFC) motif; it reads ETEQSLEELMAQMKKI.

Belongs to the ubiquitin-activating E1 family. UBA5 subfamily. As to quaternary structure, homodimer; homodimerization is required for ufm1 activation. Interacts (via UIS motif) with ufm1; binds ufm1 via a trans-binding mechanism in which ufm1 interacts with distinct sites in both subunits of the uba5 homodimer. Interacts (via C-terminus) with ufc1.

It localises to the cytoplasm. Its subcellular location is the nucleus. The protein localises to the endoplasmic reticulum membrane. It is found in the golgi apparatus. Functionally, E1-like enzyme which specifically catalyzes the first step in ufmylation. Activates ufm1 by first adenylating its C-terminal glycine residue with ATP, and thereafter linking this residue to the side chain of a cysteine residue in E1, yielding a ufm1-E1 thioester and free AMP. Activates ufm1 via a trans-binding mechanism, in which ufm1 interacts with distinct sites in both subunits of the uba5 homodimer. Trans-binding also promotes stabilization of the uba5 homodimer, and enhances ATP-binding. Transfer of ufm1 from uba5 to the E2-like enzyme UFC1 also takes place using a trans mechanism. Ufmylation plays a key role in various processes, such as ribosome recycling, response to DNA damage, interferon response or reticulophagy (also called ER-phagy). This is Ubiquitin-like modifier-activating enzyme 5 from Danio rerio (Zebrafish).